Consider the following 448-residue polypeptide: UDP-N-acetylmuramoylalanine--D-glutamate ligase (448 aa).

ATP is bound at residue 112–118; it reads GSNAKST.

Belongs to the MurCDEF family.

It is found in the cytoplasm. The enzyme catalyses UDP-N-acetyl-alpha-D-muramoyl-L-alanine + D-glutamate + ATP = UDP-N-acetyl-alpha-D-muramoyl-L-alanyl-D-glutamate + ADP + phosphate + H(+). The protein operates within cell wall biogenesis; peptidoglycan biosynthesis. Functionally, cell wall formation. Catalyzes the addition of glutamate to the nucleotide precursor UDP-N-acetylmuramoyl-L-alanine (UMA). In Acinetobacter baumannii (strain ATCC 17978 / DSM 105126 / CIP 53.77 / LMG 1025 / NCDC KC755 / 5377), this protein is UDP-N-acetylmuramoylalanine--D-glutamate ligase.